Here is a 177-residue protein sequence, read N- to C-terminus: Co-chaperone protein HscB homolog (177 aa).

Positions 8 to 80 (DFFALFGLPR…LPRAQYMLEL (73 aa)) constitute a J domain.

This sequence belongs to the HscB family. As to quaternary structure, interacts with HscA and stimulates its ATPase activity.

Functionally, co-chaperone involved in the maturation of iron-sulfur cluster-containing proteins. Seems to help targeting proteins to be folded toward HscA. This is Co-chaperone protein HscB homolog from Aromatoleum aromaticum (strain DSM 19018 / LMG 30748 / EbN1) (Azoarcus sp. (strain EbN1)).